The chain runs to 141 residues: Small ribosomal subunit protein uS19 (141 aa).

This sequence belongs to the universal ribosomal protein uS19 family.

Functionally, protein S19 forms a complex with S13 that binds strongly to the 16S ribosomal RNA. The sequence is that of Small ribosomal subunit protein uS19 from Thermofilum pendens (strain DSM 2475 / Hrk 5).